The chain runs to 197 residues: Transcription factor FapR (197 aa).

The protein belongs to the FapR family.

Its function is as follows. Transcriptional factor involved in regulation of membrane lipid biosynthesis by repressing genes involved in fatty acid and phospholipid metabolism. The chain is Transcription factor FapR from Bacillus anthracis (strain A0248).